Reading from the N-terminus, the 282-residue chain is Shikimate dehydrogenase (NADP(+)) (282 aa).

Shikimate is bound by residues 15 to 17 (SKS) and Thr-62. Lys-66 (proton acceptor) is an active-site residue. Shikimate contacts are provided by Asn-87 and Asp-103. NADP(+) contacts are provided by residues 127–131 (GAGGA), 151–156 (NRTHTK), and Met-220. Residue Tyr-222 participates in shikimate binding. Gly-244 is a binding site for NADP(+).

It belongs to the shikimate dehydrogenase family. In terms of assembly, homodimer.

It carries out the reaction shikimate + NADP(+) = 3-dehydroshikimate + NADPH + H(+). It functions in the pathway metabolic intermediate biosynthesis; chorismate biosynthesis; chorismate from D-erythrose 4-phosphate and phosphoenolpyruvate: step 4/7. Functionally, involved in the biosynthesis of the chorismate, which leads to the biosynthesis of aromatic amino acids. Catalyzes the reversible NADPH linked reduction of 3-dehydroshikimate (DHSA) to yield shikimate (SA). In Shewanella baltica (strain OS223), this protein is Shikimate dehydrogenase (NADP(+)).